Consider the following 318-residue polypeptide: UPF0725 protein At3g44770 (318 aa).

This sequence belongs to the UPF0725 (EMB2204) family.

The sequence is that of UPF0725 protein At3g44770 from Arabidopsis thaliana (Mouse-ear cress).